Here is a 124-residue protein sequence, read N- to C-terminus: Small ribosomal subunit protein uS12 (124 aa).

The disordered stretch occupies residues 105 to 124; the sequence is QGVKNRKQARSRYGAKKEKG. Residues 108-118 show a composition bias toward basic residues; the sequence is KNRKQARSRYG.

It belongs to the universal ribosomal protein uS12 family. Part of the 30S ribosomal subunit. Contacts proteins S8 and S17. May interact with IF1 in the 30S initiation complex.

Functionally, with S4 and S5 plays an important role in translational accuracy. Interacts with and stabilizes bases of the 16S rRNA that are involved in tRNA selection in the A site and with the mRNA backbone. Located at the interface of the 30S and 50S subunits, it traverses the body of the 30S subunit contacting proteins on the other side and probably holding the rRNA structure together. The combined cluster of proteins S8, S12 and S17 appears to hold together the shoulder and platform of the 30S subunit. In Mycobacterium bovis (strain ATCC BAA-935 / AF2122/97), this protein is Small ribosomal subunit protein uS12 (rpsL).